A 291-amino-acid polypeptide reads, in one-letter code: MSVEIPQQDVMIVTGMSGAGRSTVGNALEDLGWYVVDNLPPQMLKPLVELAGRAGTSLPKIAAVVDVRGGDFFSELRDILQTFGTGPRLRVLFLEATDAALVRRFEQVRRPHPLQGNGTLLDGIAAERARMIEIREASDLVIDTSELNIHQLATTITEQFSGADDAGVRVTVMSFGFKYGTPADADMVADMRFLPNPFWTPELRPLTGRDKAVSDYVLGQEGAEEFVHAYARALAPVLAGYQRENKRHATIAIGCTGGKHRSVAVSEELSSLLRALPGVAVSTKHRDLGRE.

An ATP-binding site is contributed by 15 to 22 (GMSGAGRS). 66-69 (DVRG) is a binding site for GTP.

The protein belongs to the RapZ-like family.

Functionally, displays ATPase and GTPase activities. This chain is Nucleotide-binding protein CMM_1747, found in Clavibacter michiganensis subsp. michiganensis (strain NCPPB 382).